A 211-amino-acid polypeptide reads, in one-letter code: Pyridoxine/pyridoxamine 5'-phosphate oxidase (211 aa).

Substrate-binding positions include 7–10 (RREY) and K65. FMN contacts are provided by residues 60 to 65 (RIVLLK), 75 to 76 (YT), R81, K82, and Q104. Positions 122, 126, and 130 each coordinate substrate. Residues 139–140 (QS) and W184 contribute to the FMN site. 190-192 (RLH) contributes to the substrate binding site. An FMN-binding site is contributed by R194.

The protein belongs to the pyridoxamine 5'-phosphate oxidase family. Homodimer. FMN is required as a cofactor.

The catalysed reaction is pyridoxamine 5'-phosphate + O2 + H2O = pyridoxal 5'-phosphate + H2O2 + NH4(+). It carries out the reaction pyridoxine 5'-phosphate + O2 = pyridoxal 5'-phosphate + H2O2. It participates in cofactor metabolism; pyridoxal 5'-phosphate salvage; pyridoxal 5'-phosphate from pyridoxamine 5'-phosphate: step 1/1. Its pathway is cofactor metabolism; pyridoxal 5'-phosphate salvage; pyridoxal 5'-phosphate from pyridoxine 5'-phosphate: step 1/1. In terms of biological role, catalyzes the oxidation of either pyridoxine 5'-phosphate (PNP) or pyridoxamine 5'-phosphate (PMP) into pyridoxal 5'-phosphate (PLP). This chain is Pyridoxine/pyridoxamine 5'-phosphate oxidase, found in Vibrio cholerae serotype O1 (strain ATCC 39315 / El Tor Inaba N16961).